A 207-amino-acid polypeptide reads, in one-letter code: MDDNLQLGDSGVVKNVAKLGRRARLAAEQTSSLEESRHVRKSSSSTSMGEVPPPKPARRQGGWAEETSGSAKSGRRPAVVEDVEDRRLRPQTPQGSDDEGDIPVIPDLDEVQEEDLTMQVAAPPSIQVNRVMTYRDLDNDLMKYSAFQTLDGEIDLKLLTKVLAPEQEVREEDVGWDWDRLFTEVSSELLTEWDQGEKEEQVPLPVL.

Residues 1–104 (MDDNLQLGDS…GSDDEGDIPV (104 aa)) are disordered.

This sequence belongs to the IFT43 family. As to quaternary structure, component of IFT complex A.

In terms of biological role, component of IFT complex A (IFT-A) involved in retrograde ciliary transport along microtubules from the ciliary tip to the base. The polypeptide is Intraflagellar transport protein 43 homolog A (ift43a) (Salmo salar (Atlantic salmon)).